A 564-amino-acid chain; its full sequence is Beta-catenin-like protein 1 homolog (564 aa).

The interval 1–56 (MDVDSIFKNTEETNKKRNPEEADSLEPASSRRRLAEENSDEENEEFDEEGGRFFGS) is disordered. A compositionally biased stretch (basic and acidic residues) spans 9 to 20 (NTEETNKKRNPE). A compositionally biased stretch (acidic residues) spans 37-48 (ENSDEENEEFDE). Position 39 is a phosphoserine (Ser39). HEAT repeat units follow at residues 83–133 (PTEL…VLSE) and 138–177 (IPIFLKLDCVSTFLELMNHENADITITVLELLIELTDEDV). ARM repeat units lie at residues 179–229 (PDAL…LLSV), 230–276 (DNSI…LANS), 277–326 (KEAK…LVQE), 328–366 (KGKSLFLKEEGIELCILNMKHKGKSRYSTIKVLDYLLFG), and 367–411 (PLST…LFRS). Residues 465–528 (EKSTKWFLQQ…DALKNYHENL (64 aa)) are a coiled coil.

It is found in the nucleus. Functionally, probable spliceosomal component involved in the activation of pre-mRNA splicing. The protein is Beta-catenin-like protein 1 homolog (ctnnbl1) of Schizosaccharomyces pombe (strain 972 / ATCC 24843) (Fission yeast).